A 270-amino-acid polypeptide reads, in one-letter code: FKBP-type peptidyl-prolyl cis-trans isomerase FkpA (270 aa).

Positions 1 to 25 (MKSLFKVTLLATTMAVALHAPITFA) are cleaved as a signal peptide. The 86-residue stretch at 164–249 (SDTVVVNYKG…VFDVELLDVK (86 aa)) folds into the PPIase FKBP-type domain.

Belongs to the FKBP-type PPIase family.

It is found in the periplasm. It catalyses the reaction [protein]-peptidylproline (omega=180) = [protein]-peptidylproline (omega=0). In terms of biological role, PPIases accelerate the folding of proteins. It catalyzes the cis-trans isomerization of proline imidic peptide bonds in oligopeptides. The protein is FKBP-type peptidyl-prolyl cis-trans isomerase FkpA (fkpA) of Escherichia coli (strain K12).